We begin with the raw amino-acid sequence, 480 residues long: 2-phosphoxylose phosphatase 1 (480 aa).

Over 1–6 (MLYRNR) the chain is Cytoplasmic. The helical; Signal-anchor for type II membrane protein transmembrane segment at 7-27 (FLVLLALAGLLAFLSLSLQFF) threads the bilayer. The Lumenal segment spans residues 28–480 (HLIPVSTTKN…YYDACHGEGA (453 aa)). The active-site Nucleophile is H97. Residues N194, N305, and N354 are each glycosylated (N-linked (GlcNAc...) asparagine). Residue D379 is the Proton donor of the active site.

Belongs to the histidine acid phosphatase family. In terms of assembly, interacts with B3GAT3; the interaction increases the 2-phosphoxylose phosphatase activity of PXYLP1 during completion of linkage region formation in a B3GAT3-mediated manner.

Its subcellular location is the golgi apparatus membrane. The enzyme catalyses 3-O-[beta-D-GlcA-(1-&gt;3)-beta-D-Gal-(1-&gt;3)-beta-D-Gal-(1-&gt;4)-beta-D-2-O-P-Xyl]-L-seryl-[protein] + H2O = 3-O-(beta-D-GlcA-(1-&gt;3)-beta-D-Gal-(1-&gt;3)-beta-D-Gal-(1-&gt;4)-beta-D-Xyl)-L-seryl-[protein] + phosphate. Functionally, responsible for the 2-O-dephosphorylation of xylose in the glycosaminoglycan-protein linkage region of proteoglycans thereby regulating the amount of mature glycosaminoglycan (GAG) chains. Sulfated glycosaminoglycans (GAGs), including heparan sulfate and chondroitin sulfate, are synthesized on the so-called common GAG-protein linkage region (GlcUAbeta1-3Galbeta1-3Galbeta1-4Xylbeta1-O-Ser) of core proteins, which is formed by the stepwise addition of monosaccharide residues by the respective specific glycosyltransferases. Xylose 2-O-dephosphorylation during completion of linkage region formation is a prerequisite for the initiation and efficient elongation of the repeating disaccharide region of GAG chains. This is 2-phosphoxylose phosphatase 1 from Rattus norvegicus (Rat).